The chain runs to 695 residues: Biosynthetic arginine decarboxylase 1 (695 aa).

N6-(pyridoxal phosphate)lysine is present on K141. 332-342 (LDVGGGLGVDY) contacts substrate.

Belongs to the Orn/Lys/Arg decarboxylase class-II family. SpeA subfamily. Mg(2+) serves as cofactor. The cofactor is pyridoxal 5'-phosphate.

The catalysed reaction is L-arginine + H(+) = agmatine + CO2. Catalyzes the biosynthesis of agmatine from arginine. This chain is Biosynthetic arginine decarboxylase 1 (speA1), found in Synechocystis sp. (strain ATCC 27184 / PCC 6803 / Kazusa).